A 390-amino-acid chain; its full sequence is MADIDNKEQSELDQDLEDVEEVEEEETGEETKIKARQLTVQMMQNPQILAALQERLDGLVDTPTGYIESLPKVVKRRVNALKNLQVKCAQIEAKFYEEVHDLERKYAVLYQPLFDKRFEIINAIYEPTEEECEWKPDEEDEVSEELKEKAKIEDEKKDEEKEDPKGIPEFWLTVFKNDLLSDMVQEHDEPILKHLKDIKVKFSDAGQPMSFILEFHFEPNEYFTNEVLTKTYRMRSEPDDSDPFSFDGPEIMGCTGCQIDWKKGKNVTLKTIKKKQKHKGRGTVRTVTKTVSKTSFFNFFAPPEVPENGDLDDDXEAILAADFEIGHFLRERIIPRSVLYFTGEAIEDDDDDYDEEGEEADEEGEEEGDEENDPDYDPKKDQNPAECKQQ.

Positions 1 to 10 are enriched in basic and acidic residues; it reads MADIDNKEQS. Positions 1 to 32 are disordered; sequence MADIDNKEQSELDQDLEDVEEVEEEETGEETK. Position 2 is an N-acetylalanine (Ala2). Ser10 is subject to Phosphoserine. Residues 11-28 show a composition bias toward acidic residues; it reads ELDQDLEDVEEVEEEETG. Phosphothreonine is present on residues Thr62 and Thr64. At Ser69 the chain carries Phosphoserine. Lys116 carries the post-translational modification N6-acetyllysine. Positions 125-150 match the NAP1L motif motif; that stretch reads YEPTEEECEWKPDEEDEVSEELKEKA. Residues 131–143 show a composition bias toward acidic residues; the sequence is ECEWKPDEEDEVS. Residues 131-163 form a disordered region; the sequence is ECEWKPDEEDEVSEELKEKAKIEDEKKDEEKED. Residue Ser143 is modified to Phosphoserine. The span at 144 to 163 shows a compositional bias: basic and acidic residues; it reads EELKEKAKIEDEKKDEEKED. The Nuclear localization signal signature appears at 272–278; sequence IKKKQKH. The span at 345-375 shows a compositional bias: acidic residues; it reads AIEDDDDDYDEEGEEADEEGEEEGDEENDPD. The tract at residues 345-390 is disordered; it reads AIEDDDDDYDEEGEEADEEGEEEGDEENDPDYDPKKDQNPAECKQQ. 5-glutamyl polyglycine is present on residues Glu358 and Glu359. The span at 376-390 shows a compositional bias: basic and acidic residues; sequence YDPKKDQNPAECKQQ. Cysteine methyl ester is present on Cys387. Cys387 is lipidated: S-farnesyl cysteine. Positions 388–390 are cleaved as a propeptide — removed in mature form; sequence KQQ.

It belongs to the nucleosome assembly protein (NAP) family. As to quaternary structure, homodimer. The dimer binds strongly and sequentially to single and double H2A-H2B heterodimers. Interacts with ERCC6; this interaction increases ERCC6 processivity. Interacts with RAD54. Interacts with SETD1A. Polyglycylated by TTLL10 on glutamate residues, resulting in polyglycine chains on the gamma-carboxyl group. Both polyglutamylation and polyglycylation modifications can coexist on the same protein on adjacent residues, and lowering polyglycylation levels increases polyglutamylation, and reciprocally. In terms of processing, polyglutamylated by TTLL4 on glutamate residues, resulting in polyglutamate chains on the gamma-carboxyl group. Both polyglutamylation and polyglycylation modifications can coexist on the same protein on adjacent residues, and lowering polyglycylation levels increases polyglutamylation, and reciprocally.

The protein resides in the nucleus. The protein localises to the melanosome. It is found in the cytoplasm. Its function is as follows. Histone chaperone that plays a role in the nuclear import of H2A-H2B and nucleosome assembly. Also participates in several important DNA repair mechanisms: greatly enhances ERCC6-mediated chromatin remodeling which is essential for transcription-coupled nucleotide excision DNA repair. Also stimulates homologous recombination (HR) by RAD51 and RAD54 which is essential in mitotic DNA double strand break (DSB) repair. Plays a key role in the regulation of embryonic neurogenesis. Promotes the proliferation of neural progenitors and inhibits neuronal differentiation during cortical development. Regulates neurogenesis via the modulation of RASSF10; regulates RASSF10 expression by promoting SETD1A-mediated H3K4 methylation at the RASSF10 promoter. The protein is Nucleosome assembly protein 1-like 1 (Nap1l1) of Rattus norvegicus (Rat).